The following is a 488-amino-acid chain: Splicing factor U2AF 65 kDa subunit (488 aa).

Basic and acidic residues-rich tracts occupy residues 25–55 (LESL…DEDR) and 78–129 (DRRD…KYRF). Residues 25 to 133 (LESLQEDVKP…PKKYRFWDVP (109 aa)) form a disordered region. RRM domains follow at residues 175 to 257 (RRLY…RPRD), 282 to 359 (NKIF…LACA), and 389 to 479 (EILC…YYDV).

This sequence belongs to the splicing factor SR family. In terms of assembly, forms a heterodimer with the U2AF small subunit.

The protein resides in the nucleus. Functionally, necessary for the splicing of pre-mRNA. Binds to the polypyrimidine tract of introns early during spliceosome assembly. This Caenorhabditis briggsae protein is Splicing factor U2AF 65 kDa subunit (uaf-1).